A 324-amino-acid chain; its full sequence is NAC domain-containing protein 30 (324 aa).

Positions 9-158 constitute an NAC domain; it reads MPPGFRFHPT…GWVVCRAFRK (150 aa). Residues 109–164 mediate DNA binding; it reads IGMRKTLVYYKGRAPNGRKSDWIMHEYRLQNSELAPVQEEGWVVCRAFRKPIPNQR. Low complexity predominate over residues 232 to 244; the sequence is LPQLDSPSLSPSL. Positions 232–259 are disordered; sequence LPQLDSPSLSPSLGTNKDQNESFEQEEE.

The protein belongs to the plant vascular related NAC-domain protein family. In terms of assembly, forms homodimer and heterodimers with other VND proteins (e.g. NAC037/VND1, NAC076/VND2 and NAC105/VND3) via their N-termini. Interacts with NAC083/VNI2. Expressed in developing protoxylems in roots and shoots. Detected in root protoxylem poles and in vessels of protoxylems, outermost metaxylems, inner metaxylems, shoots and hypocotyls. Expressed in roots, hypocotyls, cotyledons and leaves. Accumulates in the xylem but not in interfascicular fibers or pith cells in inflorescence stems. Present in developing vessels of the secondary xylem in roots undergoing secondary growth.

The protein resides in the nucleus. In terms of biological role, transcription activator that binds to the secondary wall NAC binding element (SNBE), 5'-(T/A)NN(C/T)(T/C/G)TNNNNNNNA(A/C)GN(A/C/T)(A/T)-3', in the promoter of target genes (e.g. genes involved in secondary wall biosynthesis, cell wall modification such as xylan accumulation, and programmed cell death). Involved in xylem formation in roots and shoots, especially regulating protoxylem vessel differentiation by promoting immature xylem vessel-specific genes expression. Can activate the expression of several genes including XCP1, MYB46, NAC010/SND3, MYB103, MYB58, MYB63, MYB83, KNAT7, ASL19 and ASL20. Its function is as follows. Required for the soilborne fungal pathogen Verticillium longisporum-induced transdifferentiation of chloroplast-containing bundle sheath cells to functional xylem elements leading to stunted growth, vein clearing, and leaf chloroses, as well as xylem hyperplasia within the vasculature of leaves, hypocotyls, and roots due to reinitiation of cambial activity and transdifferentiation of xylem parenchyma cells. This developmental reprogramming also mediates an increased drought stress tolerance. The polypeptide is NAC domain-containing protein 30 (Arabidopsis thaliana (Mouse-ear cress)).